The following is a 227-amino-acid chain: Venom allergen 5 (227 aa).

Residues 1-21 form the signal peptide; that stretch reads MKISCLICLVIVLTIIHLSQA. 4 disulfide bridges follow: C25-C37, C29-C125, C49-C117, and C193-C210. One can recognise an SCP domain in the interval 69 to 212; it reads EEHNRFRQKV…MQIHYLICNY (144 aa).

It belongs to the CRISP family. Venom allergen 5-like subfamily. In terms of tissue distribution, expressed by the venom gland.

The protein localises to the secreted. The sequence is that of Venom allergen 5 from Polistes dominula (European paper wasp).